We begin with the raw amino-acid sequence, 341 residues long: Ketol-acid reductoisomerase (NADP(+)) (341 aa).

In terms of domain architecture, KARI N-terminal Rossmann spans 1 to 182 (MATIYYDKDA…GCTRAGVLET (182 aa)). NADP(+) contacts are provided by residues 25–28 (YGSQ), Ser51, Ser53, and 83–86 (DQTQ). Residue His108 is part of the active site. Gly134 contacts NADP(+). Residues 183–328 (TFKEETETDL…KRLRDMMSWI (146 aa)) form the KARI C-terminal knotted domain. The Mg(2+) site is built by Asp191, Glu195, Glu227, and Glu231. Ser252 is a substrate binding site.

Belongs to the ketol-acid reductoisomerase family. Requires Mg(2+) as cofactor.

The catalysed reaction is (2R)-2,3-dihydroxy-3-methylbutanoate + NADP(+) = (2S)-2-acetolactate + NADPH + H(+). The enzyme catalyses (2R,3R)-2,3-dihydroxy-3-methylpentanoate + NADP(+) = (S)-2-ethyl-2-hydroxy-3-oxobutanoate + NADPH + H(+). Its pathway is amino-acid biosynthesis; L-isoleucine biosynthesis; L-isoleucine from 2-oxobutanoate: step 2/4. It functions in the pathway amino-acid biosynthesis; L-valine biosynthesis; L-valine from pyruvate: step 2/4. Functionally, involved in the biosynthesis of branched-chain amino acids (BCAA). Catalyzes an alkyl-migration followed by a ketol-acid reduction of (S)-2-acetolactate (S2AL) to yield (R)-2,3-dihydroxy-isovalerate. In the isomerase reaction, S2AL is rearranged via a Mg-dependent methyl migration to produce 3-hydroxy-3-methyl-2-ketobutyrate (HMKB). In the reductase reaction, this 2-ketoacid undergoes a metal-dependent reduction by NADPH to yield (R)-2,3-dihydroxy-isovalerate. The polypeptide is Ketol-acid reductoisomerase (NADP(+)) (Anaeromyxobacter sp. (strain K)).